The following is a 491-amino-acid chain: Glucose-6-phosphate 1-dehydrogenase (491 aa).

NADP(+)-binding positions include Arg-50, 92–93 (DV), and Lys-147. Substrate contacts are provided by His-177, Lys-181, Glu-215, and Asp-234. Residue His-239 is the Proton acceptor of the active site. Substrate-binding residues include Lys-339 and Lys-344.

Belongs to the glucose-6-phosphate dehydrogenase family.

It catalyses the reaction D-glucose 6-phosphate + NADP(+) = 6-phospho-D-glucono-1,5-lactone + NADPH + H(+). Its pathway is carbohydrate degradation; pentose phosphate pathway; D-ribulose 5-phosphate from D-glucose 6-phosphate (oxidative stage): step 1/3. Its function is as follows. Catalyzes the oxidation of glucose 6-phosphate to 6-phosphogluconolactone. The sequence is that of Glucose-6-phosphate 1-dehydrogenase from Dickeya dadantii (strain 3937) (Erwinia chrysanthemi (strain 3937)).